Consider the following 93-residue polypeptide: Pyrimidine/purine nucleoside phosphorylase (93 aa).

The protein belongs to the nucleoside phosphorylase PpnP family.

It carries out the reaction a purine D-ribonucleoside + phosphate = a purine nucleobase + alpha-D-ribose 1-phosphate. The catalysed reaction is adenosine + phosphate = alpha-D-ribose 1-phosphate + adenine. The enzyme catalyses cytidine + phosphate = cytosine + alpha-D-ribose 1-phosphate. It catalyses the reaction guanosine + phosphate = alpha-D-ribose 1-phosphate + guanine. It carries out the reaction inosine + phosphate = alpha-D-ribose 1-phosphate + hypoxanthine. The catalysed reaction is thymidine + phosphate = 2-deoxy-alpha-D-ribose 1-phosphate + thymine. The enzyme catalyses uridine + phosphate = alpha-D-ribose 1-phosphate + uracil. It catalyses the reaction xanthosine + phosphate = alpha-D-ribose 1-phosphate + xanthine. Catalyzes the phosphorolysis of diverse nucleosides, yielding D-ribose 1-phosphate and the respective free bases. Can use uridine, adenosine, guanosine, cytidine, thymidine, inosine and xanthosine as substrates. Also catalyzes the reverse reactions. In Pseudomonas paraeruginosa (strain DSM 24068 / PA7) (Pseudomonas aeruginosa (strain PA7)), this protein is Pyrimidine/purine nucleoside phosphorylase.